We begin with the raw amino-acid sequence, 590 residues long: Potassium-transporting ATPase potassium-binding subunit (590 aa).

A run of 10 helical transmembrane segments spans residues 11 to 31, 64 to 84, 136 to 156, 178 to 198, 273 to 293, 301 to 321, 403 to 423, 442 to 462, 511 to 531, and 552 to 572; these read IFIA…AAVF, TAYC…TYLI, GLAT…IAFI, ILWV…SQGV, MLEM…LGQM, WAVL…CYWA, AGLY…GLMV, AMLY…VAVL, LGFA…ALAG, and LFTV…FLPA.

It belongs to the KdpA family. In terms of assembly, the system is composed of three essential subunits: KdpA, KdpB and KdpC.

It localises to the cell inner membrane. Functionally, part of the high-affinity ATP-driven potassium transport (or Kdp) system, which catalyzes the hydrolysis of ATP coupled with the electrogenic transport of potassium into the cytoplasm. This subunit binds the periplasmic potassium ions and delivers the ions to the membrane domain of KdpB through an intramembrane tunnel. In Acidobacterium capsulatum (strain ATCC 51196 / DSM 11244 / BCRC 80197 / JCM 7670 / NBRC 15755 / NCIMB 13165 / 161), this protein is Potassium-transporting ATPase potassium-binding subunit.